A 445-amino-acid chain; its full sequence is NADH-quinone oxidoreductase subunit F (445 aa).

Residue 61 to 70 (GRGGAGFSTG) participates in NAD(+) binding. 174 to 221 (GAGRYICGEETALINSLEGRRANPRSKPPFPATSGAWGKPTCVNNVET) is an FMN binding site. 4 residues coordinate [4Fe-4S] cluster: cysteine 351, cysteine 354, cysteine 357, and cysteine 398.

Belongs to the complex I 51 kDa subunit family. In terms of assembly, composed of 13 different subunits. Subunits NuoCD, E, F, and G constitute the peripheral sector of the complex. FMN is required as a cofactor. [4Fe-4S] cluster serves as cofactor.

The enzyme catalyses a quinone + NADH + 5 H(+)(in) = a quinol + NAD(+) + 4 H(+)(out). Functionally, NDH-1 shuttles electrons from NADH, via FMN and iron-sulfur (Fe-S) centers, to quinones in the respiratory chain. The immediate electron acceptor for the enzyme in this species is believed to be ubiquinone. Couples the redox reaction to proton translocation (for every two electrons transferred, four hydrogen ions are translocated across the cytoplasmic membrane), and thus conserves the redox energy in a proton gradient. In Escherichia coli (strain K12), this protein is NADH-quinone oxidoreductase subunit F (nuoF).